Reading from the N-terminus, the 77-residue chain is EMBRYO SURROUNDING FACTOR 1-like protein 9 (77 aa).

Positions Met-1 to Cys-22 are cleaved as a signal peptide. 4 disulfides stabilise this stretch: Cys-38–Cys-54, Cys-43–Cys-75, Cys-52–Cys-71, and Cys-55–Cys-64.

This sequence belongs to the MEG family. Expressed in flowers.

This chain is EMBRYO SURROUNDING FACTOR 1-like protein 9 (ESFL9), found in Arabidopsis thaliana (Mouse-ear cress).